Here is a 382-residue protein sequence, read N- to C-terminus: 3-ketosteroid-9-alpha-monooxygenase, oxygenase component (382 aa).

A Rieske domain is found at 20-122 (WHCLGLSRTF…TMEKHGQLFV (103 aa)). Residues Cys-61, His-63, Cys-80, and His-83 each contribute to the [2Fe-2S] cluster site. Residues Asn-169, His-175, His-180, and Asp-298 each contribute to the Fe cation site.

In terms of assembly, homotrimer. The two-component system 3-ketosteroid-9-alpha-monooxygenase is composed of an oxygenase component KshA and a reductase component KshB. [2Fe-2S] cluster is required as a cofactor. The cofactor is Fe cation.

It catalyses the reaction androsta-1,4-diene-3,17-dione + 2 reduced [2Fe-2S]-[ferredoxin] + O2 + 2 H(+) = 9alpha-hydroxyandrosta-1,4-diene-3,17-dione + 2 oxidized [2Fe-2S]-[ferredoxin] + H2O. In terms of biological role, in vitro, catalyzes the introduction of a 9alpha-hydroxyl moiety into the ring B of 3-ketosteroid substrates such as 1,4-androstadiene-3,17-dione (ADD), 4-androstene-3,17-dione (AD), 4-androstene-17beta-ol-3-one (testosterone), 4-pregnene-3,20-dione (progesterone), 23,24-bisnorcholesta-4-ene-22-oate and 23,24-bisnorcholesta-1,4-diene-22-oate. In Rhodococcus rhodochrous, this protein is 3-ketosteroid-9-alpha-monooxygenase, oxygenase component.